The following is a 436-amino-acid chain: ATP-dependent RNA helicase RhlB (436 aa).

A Q motif motif is present at residues 9 to 37; the sequence is QKFADFPLHKEVHQALNEAGFEFCTPIQA. Positions 40-219 constitute a Helicase ATP-binding domain; the sequence is LPILLEKKDI…YDHMNEPEKV (180 aa). 53-60 is an ATP binding site; it reads AQTGTGKT. The DEAD box motif lies at 165-168; it reads DEAD. In terms of domain architecture, Helicase C-terminal spans 243-390; that stretch reads KMPLLLSLLE…VTSYDSDALL (148 aa). The interval 392-436 is disordered; the sequence is DIPPPVRIHRKPSTHTRNTRDRGASRPQGGQRSGPRRHDRTRRHS. Residues 425-436 show a composition bias toward basic residues; sequence GPRRHDRTRRHS.

Belongs to the DEAD box helicase family. RhlB subfamily. As to quaternary structure, component of the RNA degradosome, which is a multiprotein complex involved in RNA processing and mRNA degradation.

It is found in the cytoplasm. It carries out the reaction ATP + H2O = ADP + phosphate + H(+). Its function is as follows. DEAD-box RNA helicase involved in RNA degradation. Has RNA-dependent ATPase activity and unwinds double-stranded RNA. This chain is ATP-dependent RNA helicase RhlB, found in Shewanella halifaxensis (strain HAW-EB4).